The primary structure comprises 142 residues: Large ribosomal subunit protein uL13 (142 aa).

Belongs to the universal ribosomal protein uL13 family. Part of the 50S ribosomal subunit.

In terms of biological role, this protein is one of the early assembly proteins of the 50S ribosomal subunit, although it is not seen to bind rRNA by itself. It is important during the early stages of 50S assembly. The sequence is that of Large ribosomal subunit protein uL13 from Koribacter versatilis (strain Ellin345).